The chain runs to 335 residues: Pyridoxal 5'-phosphate synthase subunit PdxS (335 aa).

Asp30 is a binding site for D-ribose 5-phosphate. Catalysis depends on Lys87, which acts as the Schiff-base intermediate with D-ribose 5-phosphate. Gly159 lines the D-ribose 5-phosphate pocket. A D-glyceraldehyde 3-phosphate-binding site is contributed by Arg171. Residues Gly257 and 278 to 279 (GS) each bind D-ribose 5-phosphate.

This sequence belongs to the PdxS/SNZ family. In terms of assembly, in the presence of PdxT, forms a dodecamer of heterodimers.

It catalyses the reaction aldehydo-D-ribose 5-phosphate + D-glyceraldehyde 3-phosphate + L-glutamine = pyridoxal 5'-phosphate + L-glutamate + phosphate + 3 H2O + H(+). The protein operates within cofactor biosynthesis; pyridoxal 5'-phosphate biosynthesis. In terms of biological role, catalyzes the formation of pyridoxal 5'-phosphate from ribose 5-phosphate (RBP), glyceraldehyde 3-phosphate (G3P) and ammonia. The ammonia is provided by the PdxT subunit. Can also use ribulose 5-phosphate and dihydroxyacetone phosphate as substrates, resulting from enzyme-catalyzed isomerization of RBP and G3P, respectively. The polypeptide is Pyridoxal 5'-phosphate synthase subunit PdxS (Pyrococcus furiosus (strain ATCC 43587 / DSM 3638 / JCM 8422 / Vc1)).